A 341-amino-acid polypeptide reads, in one-letter code: Tetraacyldisaccharide 4'-kinase (341 aa).

Position 54-61 (54-61 (TVGGAGKT)) interacts with ATP.

The protein belongs to the LpxK family.

It carries out the reaction a lipid A disaccharide + ATP = a lipid IVA + ADP + H(+). It participates in glycolipid biosynthesis; lipid IV(A) biosynthesis; lipid IV(A) from (3R)-3-hydroxytetradecanoyl-[acyl-carrier-protein] and UDP-N-acetyl-alpha-D-glucosamine: step 6/6. Functionally, transfers the gamma-phosphate of ATP to the 4'-position of a tetraacyldisaccharide 1-phosphate intermediate (termed DS-1-P) to form tetraacyldisaccharide 1,4'-bis-phosphate (lipid IVA). This Brucella suis (strain ATCC 23445 / NCTC 10510) protein is Tetraacyldisaccharide 4'-kinase.